A 487-amino-acid chain; its full sequence is GTPase Der (487 aa).

2 EngA-type G domains span residues 3-166 and 199-372; these read PVVA…AEAM and IKLA…DSAT. GTP is bound by residues 9–16, 56–60, 118–121, 205–212, 252–256, and 317–320; these read GRPNVGKS, DTGGI, NKID, GKPNVGKS, DTAGV, and NKWD. In terms of domain architecture, KH-like spans 373-457; it reads RRVSTSMLTR…PIQLRFQEGD (85 aa).

It belongs to the TRAFAC class TrmE-Era-EngA-EngB-Septin-like GTPase superfamily. EngA (Der) GTPase family. In terms of assembly, associates with the 50S ribosomal subunit.

GTPase that plays an essential role in the late steps of ribosome biogenesis. The chain is GTPase Der from Shewanella oneidensis (strain ATCC 700550 / JCM 31522 / CIP 106686 / LMG 19005 / NCIMB 14063 / MR-1).